The primary structure comprises 207 residues: MVATCLQVVGFVTSFVGWIGIIVTTSTNDWVVTCSYTIPTCRKMDELGSKGLWADCVMATGLYHCKPLVDILILPGYVQACRALMIAASVLGLPAILLLLTVLPCIRMGHEPGVAKYRRAQLAGVLLILLALCAIVATIWFPVCAHREITIVSFGYSLYAGWIGAVMCLVGGCVIVCCSGDAQSFGENRFYYSSGSSSPTHAKSAHV.

Residue methionine 1 is a topological domain, cytoplasmic. Residues 2-22 (VATCLQVVGFVTSFVGWIGII) traverse the membrane as a helical segment. Over 23-82 (VTTSTNDWVVTCSYTIPTCRKMDELGSKGLWADCVMATGLYHCKPLVDILILPGYVQACR) the chain is Extracellular. A helical transmembrane segment spans residues 83–103 (ALMIAASVLGLPAILLLLTVL). The Cytoplasmic segment spans residues 104–122 (PCIRMGHEPGVAKYRRAQL). Residues 123-143 (AGVLLILLALCAIVATIWFPV) form a helical membrane-spanning segment. Topologically, residues 144–157 (CAHREITIVSFGYS) are extracellular. The helical transmembrane segment at 158-178 (LYAGWIGAVMCLVGGCVIVCC) threads the bilayer. Residues 179 to 207 (SGDAQSFGENRFYYSSGSSSPTHAKSAHV) are Cytoplasmic-facing. 4 positions are modified to phosphoserine: serine 193, serine 194, serine 197, and serine 198.

This sequence belongs to the claudin family. In terms of assembly, interacts with tetraspanin-3/TSPAN3. Interacts with OCLN.

It is found in the cell junction. It localises to the tight junction. Its subcellular location is the cell membrane. Its function is as follows. Plays a major role in tight junction-specific obliteration of the intercellular space, through calcium-independent cell-adhesion activity. This Mus musculus (Mouse) protein is Claudin-11 (Cldn11).